Here is a 286-residue protein sequence, read N- to C-terminus: 4-hydroxybenzoate octaprenyltransferase (286 aa).

7 helical membrane-spanning segments follow: residues 21-40 (GTLLLLWPCLMALMLAAGGM), 95-115 (ILFVILGLSAFGLVLLLNGLV), 142-162 (FLGIVWSWSIPMAYAAQTGEV), 167-187 (WWLFAANWCWTVAYDTMYAMV), 210-230 (QIIGLFQLAALACFIAAGWSA), 235-255 (LYGLGILTFVGFSTYQQMLIF), and 266-286 (FLNNNWAGLALFVGLGADYLI).

It belongs to the UbiA prenyltransferase family. The cofactor is Mg(2+).

The protein localises to the cell inner membrane. The catalysed reaction is all-trans-octaprenyl diphosphate + 4-hydroxybenzoate = 4-hydroxy-3-(all-trans-octaprenyl)benzoate + diphosphate. It participates in cofactor biosynthesis; ubiquinone biosynthesis. Its function is as follows. Catalyzes the prenylation of para-hydroxybenzoate (PHB) with an all-trans polyprenyl group. Mediates the second step in the final reaction sequence of ubiquinone-8 (UQ-8) biosynthesis, which is the condensation of the polyisoprenoid side chain with PHB, generating the first membrane-bound Q intermediate 3-octaprenyl-4-hydroxybenzoate. This chain is 4-hydroxybenzoate octaprenyltransferase, found in Shewanella baltica (strain OS223).